The following is a 439-amino-acid chain: Skin secretory protein xP2 (439 aa).

Residues methionine 1 to glycine 22 form the signal peptide. The disordered stretch occupies residues alanine 25–cysteine 351. 5 tandem repeats follow at residues glycine 26 to glutamate 33, glycine 34 to glutamate 41, glycine 42 to glutamate 51, glycine 52 to glutamate 59, and glycine 60 to glutamate 69. The 33 X approximate repeats of G-G(0,1)-[EV](0,1)-A-P-[A-P](1,3)-A-E stretch occupies residues glycine 26 to glutamate 343. Residues glycine 26–glycine 345 are compositionally biased toward low complexity. The stretch at glycine 70–aspartate 77 is one 6; approximate repeat. A run of 9 repeats spans residues glycine 78–glutamate 87, glycine 88–glutamate 97, glycine 98–glutamate 107, glycine 108–glutamate 115, glycine 116–glutamate 125, glycine 126–glutamate 135, glycine 136–glutamate 145, glycine 146–glutamate 153, and glycine 154–glutamate 163. A 16; approximate repeat occupies valine 164–glutamate 173. 14 consecutive repeat copies span residues glycine 174–glutamate 183, glycine 184–glutamate 193, glycine 194–glutamate 203, glycine 204–glutamate 215, glycine 216–glutamate 225, glycine 226–glutamate 235, glycine 236–glutamate 245, glycine 246–glutamate 255, glycine 256–glutamate 265, glycine 266–glutamate 275, glycine 276–glutamate 285, glycine 286–glutamate 293, glycine 294–glutamate 303, and glycine 304–glutamate 313. A 31; approximate repeat occupies glycine 314–glutamate 321. A 32; approximate repeat occupies glycine 322–glutamate 331. The stretch at glycine 332–glutamate 343 is one 33; approximate repeat. 2 P-type domains span residues glutamate 349 to arginine 392 and alanine 396 to lysine 439. 6 disulfides stabilise this stretch: cysteine 351/cysteine 377, cysteine 361/cysteine 376, cysteine 371/cysteine 388, cysteine 398/cysteine 424, cysteine 408/cysteine 423, and cysteine 418/cysteine 435.

As to expression, skin.

It is found in the secreted. Functionally, may act as a growth factor in the germinal layer of the epidermis. May also be involved in growth of regenerating glands and in protection of the skin from the external environment. The polypeptide is Skin secretory protein xP2 (p2) (Xenopus laevis (African clawed frog)).